A 391-amino-acid chain; its full sequence is Formate-dependent phosphoribosylglycinamide formyltransferase (391 aa).

Residues 18–19 (EL) and Glu78 contribute to the N(1)-(5-phospho-beta-D-ribosyl)glycinamide site. ATP-binding positions include Arg110, Lys151, 156-161 (SSGKGQ), 191-194 (EEFI), and Glu199. The region spanning 115-305 (ELAHEELGIR…EFELHLRAIL (191 aa)) is the ATP-grasp domain. Residues Glu264 and Glu276 each coordinate Mg(2+). N(1)-(5-phospho-beta-D-ribosyl)glycinamide contacts are provided by residues Asp283, Lys353, and 360 to 361 (RR).

Belongs to the PurK/PurT family. Homodimer.

The catalysed reaction is N(1)-(5-phospho-beta-D-ribosyl)glycinamide + formate + ATP = N(2)-formyl-N(1)-(5-phospho-beta-D-ribosyl)glycinamide + ADP + phosphate + H(+). The protein operates within purine metabolism; IMP biosynthesis via de novo pathway; N(2)-formyl-N(1)-(5-phospho-D-ribosyl)glycinamide from N(1)-(5-phospho-D-ribosyl)glycinamide (formate route): step 1/1. Functionally, involved in the de novo purine biosynthesis. Catalyzes the transfer of formate to 5-phospho-ribosyl-glycinamide (GAR), producing 5-phospho-ribosyl-N-formylglycinamide (FGAR). Formate is provided by PurU via hydrolysis of 10-formyl-tetrahydrofolate. The sequence is that of Formate-dependent phosphoribosylglycinamide formyltransferase from Trichormus variabilis (strain ATCC 29413 / PCC 7937) (Anabaena variabilis).